A 75-amino-acid polypeptide reads, in one-letter code: UPF0352 protein KPN78578_25810 (75 aa).

Belongs to the UPF0352 family.

This Klebsiella pneumoniae subsp. pneumoniae (strain ATCC 700721 / MGH 78578) protein is UPF0352 protein KPN78578_25810.